The chain runs to 246 residues: Envelope glycoprotein gp95 (246 aa).

The Extracellular portion of the chain corresponds to 1-192 (IPSRPVGGPC…EWAVHLLKGL (192 aa)). The N-linked (GlcNAc...) asparagine; by host glycan is linked to Asn-31. The cysteines at positions 50 and 86 are disulfide-linked. The fusion peptide stretch occupies residues 58–78 (GPTARIFASILAPGVAAAQAL). Residues 75–125 (AQALREIERLACWSVKQANLTTSLLGDLLDDVTSIRHAVLQNRAAIDFLLL) are a coiled coil. N-linked (GlcNAc...) asparagine; by host glycosylation occurs at Asn-93. The tract at residues 114-130 (LQNRAAIDFLLLAHGHG) is immunosuppression. The cysteines at positions 131 and 138 are disulfide-linked. A glycan (N-linked (GlcNAc...) asparagine; by host) is linked at Asn-141. Residues 143–173 (SDQSESIQKKFQLMKEHVNKIGVDSDLIGSW) adopt a coiled-coil conformation. Residues 193-213 (LLGLVVILLLVVCLPCLLQML) traverse the membrane as a helical segment. 2 S-palmitoyl cysteine; by host lipidation sites follow: Cys-205 and Cys-208. At 214–246 (CGNRRKMINNSISYHTEYKKLQKACGQPESRIV) the chain is on the cytoplasmic side.

This sequence belongs to the Alpharetroviruses envelope glycoprotein family. Heterodimer with the transmembrane protein. The mature envelope protein (Env) consists of a trimer of SU-TM heterodimers attached by a labile interchain disulfide bond. Interacts with the host cell entry receptor TVA isoforms pg900 and pg800; this interaction allows the viral attachment. As to quaternary structure, heterodimer with the surface protein. The mature envelope protein (Env) consists of a trimer of SU-TM heterodimers attached by a labile interchain disulfide bond. In terms of processing, specific enzymatic cleavages in vivo yield mature proteins. Envelope glycoproteins are synthesized as an inactive precursor that is N-glycosylated and processed likely by host cell furin or by a furin-like protease in the Golgi to yield the mature SU and TM proteins. The cleavage site between SU and TM requires the minimal sequence [KR]-X-[KR]-R. The transmembrane protein is palmitoylated. Palmitoylation is necessary for glycoprotein function and infectivity.

It is found in the virion membrane. The protein resides in the host cell membrane. In terms of biological role, the surface protein (SU) attaches the virus to the host cell entry receptor TVA. This interaction triggers the refolding of the transmembrane protein (TM) thereby unmasking its fusion peptide and the formation of a reactive thiolate to activate its fusogenic potential. Fusion occurs at the host cell plasma membrane. Its function is as follows. The transmembrane protein (TM) acts as a class I viral fusion protein. Under the current model, the protein has at least 3 conformational states: pre-fusion native state, pre-hairpin intermediate state, and post-fusion hairpin state. During viral and target cell membrane fusion, the coiled coil regions (heptad repeats) assume a trimer-of-hairpins structure, positioning the fusion peptide in close proximity to the C-terminal region of the ectodomain. The formation of this structure appears to drive apposition and subsequent fusion of viral and target cell membranes. Membranes fusion leads to delivery of the nucleocapsid into the cytoplasm. This is Envelope glycoprotein gp95 (env) from Rous sarcoma virus subgroup A (strain Schmidt-Ruppin) (RSV-SR-A).